We begin with the raw amino-acid sequence, 542 residues long: Thermosome subunit (542 aa).

The protein belongs to the TCP-1 chaperonin family. As to quaternary structure, forms an oligomeric complex of eight-membered rings.

Its function is as follows. Molecular chaperone; binds unfolded polypeptides in vitro, and has a weak ATPase activity. The chain is Thermosome subunit (ths) from Methanocaldococcus jannaschii (strain ATCC 43067 / DSM 2661 / JAL-1 / JCM 10045 / NBRC 100440) (Methanococcus jannaschii).